The primary structure comprises 270 residues: 3-phenylpropionate-dihydrodiol/cinnamic acid-dihydrodiol dehydrogenase (270 aa).

10–34 (FITGGGSGLGLALVERFIEEGAQVA) lines the NAD(+) pocket. Position 143 (Ser143) interacts with substrate. The active-site Proton acceptor is Tyr156.

It belongs to the short-chain dehydrogenases/reductases (SDR) family.

The enzyme catalyses 3-(cis-5,6-dihydroxycyclohexa-1,3-dien-1-yl)propanoate + NAD(+) = 3-(2,3-dihydroxyphenyl)propanoate + NADH + H(+). It carries out the reaction (2E)-3-(cis-5,6-dihydroxycyclohexa-1,3-dien-1-yl)prop-2-enoate + NAD(+) = (2E)-3-(2,3-dihydroxyphenyl)prop-2-enoate + NADH + H(+). It participates in aromatic compound metabolism; 3-phenylpropanoate degradation. Converts 3-phenylpropionate-dihydrodiol (PP-dihydrodiol) and cinnamic acid-dihydrodiol (CI-dihydrodiol) into 3-(2,3-dihydroxylphenyl)propanoic acid (DHPP) and 2,3-dihydroxicinnamic acid (DHCI), respectively. In Escherichia coli (strain ATCC 8739 / DSM 1576 / NBRC 3972 / NCIMB 8545 / WDCM 00012 / Crooks), this protein is 3-phenylpropionate-dihydrodiol/cinnamic acid-dihydrodiol dehydrogenase.